The following is a 162-amino-acid chain: Small ribosomal subunit protein uS13 (162 aa).

The tract at residues 142–162 is disordered; the sequence is RGQRTKSTGRRGSTVGVSRKK.

It belongs to the universal ribosomal protein uS13 family. In terms of assembly, part of the 30S ribosomal subunit. Forms a loose heterodimer with protein S19. Forms two bridges to the 50S subunit in the 70S ribosome.

Its function is as follows. Located at the top of the head of the 30S subunit, it contacts several helices of the 16S rRNA. In the 70S ribosome it contacts the 23S rRNA (bridge B1a) and protein L5 of the 50S subunit (bridge B1b), connecting the 2 subunits; these bridges are implicated in subunit movement. This is Small ribosomal subunit protein uS13 from Methanosarcina acetivorans (strain ATCC 35395 / DSM 2834 / JCM 12185 / C2A).